A 440-amino-acid polypeptide reads, in one-letter code: MKLVLGALQWTAFIIAAAIVVPVAVAQSFHLDHSDSARLIQSTFFVLGIAAVIQCLKGHRLPINESPAGLWWGVYTIYAGLTGTVFATYGDTLRGLQGALLVSAVCFFLLSVFKVIDRLAKLFTPVVTGVYLLLLVMQLSQPIIKGILGIGYRQDGVDGLVFGLALVVIAAAFIMTNSNIMFFKQYSILLALFGGWVLFAAAGAAKPIEMPDRLFQLPSLFPFGTPLFNSGLIITSIFITILLIVNMLASMKVVDIAMKKFSKQPDGKHHERHAGFAASFSHLLSGLTGAIAPVPISGAAGFIETTKMPSKKPFMLGSILVIVISVIPFFMNTFASLPSPVGFAVNFVVFSAMGGLAFAEFDSYEKEESKRVRSIIGISLLTGVGIMFVPETALKGLHPVFISLLSNGLVLGTLAAIAADQFQLWRRRKSDNLVSTENKH.

The next 13 helical transmembrane spans lie at 3–23 (LVLGALQWTAFIIAAAIVVPV), 39–59 (LIQSTFFVLGIAAVIQCLKGH), 67–87 (PAGLWWGVYTIYAGLTGTVFA), 96–116 (LQGALLVSAVCFFLLSVFKVI), 130–150 (VYLLLLVMQLSQPIIKGILGI), 156–176 (GVDGLVFGLALVVIAAAFIMT), 188–208 (ILLALFGGWVLFAAAGAAKPI), 231–251 (GLIITSIFITILLIVNMLASM), 283–303 (LLSGLTGAIAPVPISGAAGFI), 314–334 (FMLGSILVIVISVIPFFMNTF), 341–361 (VGFAVNFVVFSAMGGLAFAEF), 374–394 (SIIGISLLTGVGIMFVPETAL), and 399–419 (PVFISLLSNGLVLGTLAAIAA).

It belongs to the nucleobase:cation symporter-2 (NCS2) (TC 2.A.40) family.

It localises to the cell membrane. This chain is Putative purine permease YwdJ (ywdJ), found in Bacillus subtilis (strain 168).